A 651-amino-acid polypeptide reads, in one-letter code: Probable Xaa-Pro aminopeptidase P (651 aa).

Mn(2+)-binding residues include D448, D459, E557, and E571.

This sequence belongs to the peptidase M24B family. Mn(2+) serves as cofactor.

It catalyses the reaction Release of any N-terminal amino acid, including proline, that is linked to proline, even from a dipeptide or tripeptide.. Catalyzes the removal of a penultimate prolyl residue from the N-termini of peptides. This Coccidioides posadasii (strain C735) (Valley fever fungus) protein is Probable Xaa-Pro aminopeptidase P (AMPP).